A 449-amino-acid chain; its full sequence is VIRF-1 (449 aa).

A disordered region spans residues 1–60; it reads MDPGQRPNPFGAPGAIPKKPCLSQGSPGTSGSGAPCDEPSRSESPGEGPSGTGGSAAAGD. Positions 89-195 form a DNA-binding region, IRF tryptophan pentad repeat; it reads KASIKDWIVC…HHFLVFRVRK (107 aa). N6-propionyllysine; by host is present on residues Lys-406 and Lys-442.

The protein belongs to the IRF family. As to quaternary structure, forms homodimers. Interacts with host IRF3, IRF7, and CREBBP. Interacts with host SYNCRIP. Interacts with host USP7. Interacts (via C-terminus) with host HERC5. Interacts with host GABARAPL1. Interacts with host SIRT6. Post-translationally, ISGylated. In terms of processing, propionylated in lysine residues Lys-406 and Lys-442, which is required for effective inhibition of IFN-beta production and antiviral signaling.

It localises to the host cytoplasm. Its function is as follows. Plays a role in the inhibition of host innate response by repressing the expression of interferon-inducible genes and blocking host IRF1- and IRF3-mediated transcription. Blocks the interaction between host IRF3 and CREBBP. Regulates the host cellular metabolism by increasing glucose uptake, ATP production and lactate secretion through down-regulation of heterogeneous nuclear ribonuclear protein Q1/SYNCRIP. Mechanistically, induces ubiquitination and degradation of SYNCRIP through the ubiquitin-proteasome pathway by recruiting KLHL3/CUL3 ubiquitin ligase complex. Disrupts host TP53 signaling pathway during viral infection by interacting with host USP7 and thereby decreasing the availability of USP7 for deubiquitinating and stabilizing TP53. Plays a role in the global inhibition of protein ISGylation by interacting with host HERC5 leading to its inhibition. Promotes its own propionylation by blocking SIRT6 interaction with ubiquitin-specific peptidase 10/USP10 leading to SIRT6 degradation via a ubiquitin-proteasome pathway. In turn, propionylation is required to block IRF3-CBP/p300 recruitment and to repress the STING DNA sensing pathway. Plays a role in the activation of mitophagy during infection via interaction with the host proteins NIX/BNIP3L, TUFM and GABARAPL1 thereby inhibiting antiviral responses and contributing to productive replication. In Homo sapiens (Human), this protein is VIRF-1 (vIRF-1).